We begin with the raw amino-acid sequence, 452 residues long: Tripartite motif-containing protein 49D (452 aa).

The RING-type zinc finger occupies 15–56 (CPICLNYFIDPVTIDCGHSFCRPCFYLNWQDIPILTQCFECL). The segment at 88–129 (SEEQMCGTHRETKKIFCEVDRSLLCLLCSSSLEHRYHRHCPA) adopts a B box-type zinc-finger fold. Zn(2+)-binding residues include cysteine 93, histidine 96, cysteine 115, and histidine 121. The 184-residue stretch at 269–452 (ELRAGPITGL…LRPIFCCVHL (184 aa)) folds into the B30.2/SPRY domain.

It belongs to the TRIM/RBCC family.

The sequence is that of Tripartite motif-containing protein 49D from Homo sapiens (Human).